We begin with the raw amino-acid sequence, 269 residues long: Thiazole synthase (269 aa).

K105 acts as the Schiff-base intermediate with DXP in catalysis. 1-deoxy-D-xylulose 5-phosphate is bound by residues G166, 192–193 (AG), and 214–215 (NT). The interval 245-269 (AMSAQDAAQPSTPVLGTPFWHHDHG) is disordered.

It belongs to the ThiG family. As to quaternary structure, homotetramer. Forms heterodimers with either ThiH or ThiS.

Its subcellular location is the cytoplasm. The enzyme catalyses [ThiS sulfur-carrier protein]-C-terminal-Gly-aminoethanethioate + 2-iminoacetate + 1-deoxy-D-xylulose 5-phosphate = [ThiS sulfur-carrier protein]-C-terminal Gly-Gly + 2-[(2R,5Z)-2-carboxy-4-methylthiazol-5(2H)-ylidene]ethyl phosphate + 2 H2O + H(+). It participates in cofactor biosynthesis; thiamine diphosphate biosynthesis. Functionally, catalyzes the rearrangement of 1-deoxy-D-xylulose 5-phosphate (DXP) to produce the thiazole phosphate moiety of thiamine. Sulfur is provided by the thiocarboxylate moiety of the carrier protein ThiS. In vitro, sulfur can be provided by H(2)S. The protein is Thiazole synthase of Paracidovorax citrulli (strain AAC00-1) (Acidovorax citrulli).